A 431-amino-acid chain; its full sequence is Glutamate-1-semialdehyde 2,1-aminomutase 2 (431 aa).

Lys268 bears the N6-(pyridoxal phosphate)lysine mark.

Belongs to the class-III pyridoxal-phosphate-dependent aminotransferase family. HemL subfamily. As to quaternary structure, homodimer. Pyridoxal 5'-phosphate serves as cofactor.

Its subcellular location is the cytoplasm. It carries out the reaction (S)-4-amino-5-oxopentanoate = 5-aminolevulinate. The protein operates within porphyrin-containing compound metabolism; protoporphyrin-IX biosynthesis; 5-aminolevulinate from L-glutamyl-tRNA(Glu): step 2/2. The sequence is that of Glutamate-1-semialdehyde 2,1-aminomutase 2 from Bacillus licheniformis (strain ATCC 14580 / DSM 13 / JCM 2505 / CCUG 7422 / NBRC 12200 / NCIMB 9375 / NCTC 10341 / NRRL NRS-1264 / Gibson 46).